A 27-amino-acid chain; its full sequence is Flagellar filament 31.5 kDa core protein (27 aa).

Belongs to the bacterial flagellin family. The flagellum consists of an outer layer composed of repeating units of FlaA around a core that contains one or all of five antigenically related polypeptides.

It localises to the periplasmic flagellum. The protein resides in the periplasm. Functionally, component of the core of the flagella. In Spirochaeta aurantia, this protein is Flagellar filament 31.5 kDa core protein.